Reading from the N-terminus, the 217-residue chain is 3,4-dihydroxy-2-butanone 4-phosphate synthase (217 aa).

D-ribulose 5-phosphate-binding positions include Arg-37–Glu-38, Asp-42, Arg-150–Thr-154, and Glu-174. Glu-38 lines the Mg(2+) pocket. His-153 contributes to the Mg(2+) binding site.

It belongs to the DHBP synthase family. As to quaternary structure, homodimer. Mg(2+) serves as cofactor. Mn(2+) is required as a cofactor.

It carries out the reaction D-ribulose 5-phosphate = (2S)-2-hydroxy-3-oxobutyl phosphate + formate + H(+). It participates in cofactor biosynthesis; riboflavin biosynthesis; 2-hydroxy-3-oxobutyl phosphate from D-ribulose 5-phosphate: step 1/1. Its function is as follows. Catalyzes the conversion of D-ribulose 5-phosphate to formate and 3,4-dihydroxy-2-butanone 4-phosphate. The sequence is that of 3,4-dihydroxy-2-butanone 4-phosphate synthase from Pectobacterium carotovorum subsp. carotovorum (strain PC1).